The primary structure comprises 258 residues: MSSSFIPKRIALVLNLAMVAIQVFFIRSVSSMNETNSYLYHKCSEAEGKYKSKSPYEGNLNFLTNDMYKDTFVRGFVYAYHGDDPNTVYILLQCRGDSYGSKCGSCLSTATSELRRRCPMNKAGIVWFDKCLLKISPTAFFEKIDDKNKFYMYSTKKVSDPALFNVKTKALLTELTAKATRRSDKLLLYETGEMKLGKMKLYGMVQCRRDLWFTVCKTCLDKIIGELPKCCDGKEGGRVLSGSCNFRYEIYPFLDTVR.

An N-terminal signal peptide occupies residues methionine 1–serine 31. 2 Gnk2-homologous domains span residues tyrosine 38–phenylalanine 140 and aspartate 146–phenylalanine 253.

Belongs to the cysteine-rich repeat secretory protein family.

The protein resides in the secreted. This is Putative cysteine-rich repeat secretory protein 61 (CRRSP61) from Arabidopsis thaliana (Mouse-ear cress).